Reading from the N-terminus, the 113-residue chain is Hydrogenase maturation factor HybF (113 aa).

Residues His2 and Glu3 each coordinate Ni(2+). 4 residues coordinate Zn(2+): Cys73, Cys76, Cys89, and Cys92.

It belongs to the HypA/HybF family. HybF subfamily.

Involved in the maturation of [NiFe] hydrogenases. Required for nickel insertion into the metal center of the hydrogenase. This is Hydrogenase maturation factor HybF from Salmonella typhi.